We begin with the raw amino-acid sequence, 231 residues long: 7-cyano-7-deazaguanine synthase (231 aa).

Residue 8-18 (FSGGQDSTTCL) participates in ATP binding. C188, C197, C200, and C203 together coordinate Zn(2+).

Belongs to the QueC family. Zn(2+) is required as a cofactor.

The catalysed reaction is 7-carboxy-7-deazaguanine + NH4(+) + ATP = 7-cyano-7-deazaguanine + ADP + phosphate + H2O + H(+). The protein operates within purine metabolism; 7-cyano-7-deazaguanine biosynthesis. Catalyzes the ATP-dependent conversion of 7-carboxy-7-deazaguanine (CDG) to 7-cyano-7-deazaguanine (preQ(0)). The chain is 7-cyano-7-deazaguanine synthase from Erwinia tasmaniensis (strain DSM 17950 / CFBP 7177 / CIP 109463 / NCPPB 4357 / Et1/99).